The chain runs to 617 residues: Protein AsmA (617 aa).

At Met1 to Arg3 the chain is on the cytoplasmic side. Residues Phe4–Leu24 form a helical membrane-spanning segment. Residues Leu25–Met617 are Periplasmic-facing. Polar residues predominate over residues Thr302 to Leu319. Residues Thr302 to Arg321 are disordered.

This sequence belongs to the AsmA family.

Its subcellular location is the cell inner membrane. Could be involved in the assembly of outer membrane proteins. May indirectly influence the assembly of outer membrane proteins, potentially by altering outer membrane fluidity. Inhibits the assembly of mutant forms of outer membrane protein F (OmpF). This Escherichia coli (strain K12) protein is Protein AsmA.